The chain runs to 319 residues: QSSTVTPNVVVAADGSGDYKTVSEAVAAAPEDSKTRYVIRIKAGVYRENVDVPKKKKNIMFLGDGRTSTIITASKNVQDGSTTFNSATVAAVGAGFLARDITFQNTAGAAKHQAVALRVGSDLSAFYRCDILAYQDSLYVHSNRQFFINCFIAGTVDFIFGNAAVVLQDCDIHARRPGSGQKNMVTAQGRTDPNQNTGIVIQKSRIGATSDLQPVQSSFPTYLGRPWKEYSRTVVMQSSITNVINPAGWFPWDGNFALDTLYYGEYQNTGAGAATSGRVTWKGFKVITSSTEAQGFTPGSFIAGGSWLKATTFPFSLGL.

Pyrrolidone carboxylic acid is present on glutamine 1. The substrate site is built by threonine 83 and glutamine 113. The Proton donor role is filled by aspartate 136. The cysteines at positions 150 and 170 are disulfide-linked. The active-site Nucleophile is the aspartate 157. Substrate is bound by residues arginine 225 and tryptophan 227.

The protein belongs to the pectinesterase family.

It localises to the secreted. Its subcellular location is the cell wall. The catalysed reaction is [(1-&gt;4)-alpha-D-galacturonosyl methyl ester](n) + n H2O = [(1-&gt;4)-alpha-D-galacturonosyl](n) + n methanol + n H(+). It functions in the pathway glycan metabolism; pectin degradation; 2-dehydro-3-deoxy-D-gluconate from pectin: step 1/5. Functionally, catalyzes the deesterification of methyl-esterified D-galactosiduronic acid units in pectic compounds. It participates in modulating cell wall during fruit ripening, cell wall extension during pollen germination, and in defense mechanisms against pathogens. The chain is Pectinesterase from Daucus carota (Wild carrot).